Reading from the N-terminus, the 132-residue chain is Precursor of CEP10 (132 aa).

The signal sequence occupies residues Met1 to Asp19. Residues Lys20 to Asn66 constitute a propeptide that is removed on maturation. Hydroxyproline is present on residues Pro70 and Pro73. Positions Pro82–Lys91 are excised as a propeptide. A hydroxyproline mark is found at Pro95, Pro98, and Pro102. A propeptide spanning residues Leu107–Asn116 is cleaved from the precursor. Pro120, Pro123, and Pro127 each carry hydroxyproline. Pro132 is a propeptide.

The protein belongs to the C-terminally encoded plant signaling peptide (CEP) family. As to quaternary structure, interacts with CEP receptors (e.g. CEPR1 and CEPR2). The mature small signaling peptide is generated by proteolytic processing of the longer precursor.

The protein localises to the secreted. It is found in the extracellular space. It localises to the apoplast. Extracellular signaling peptide that may regulate primary root growth rate and systemic nitrogen (N)-demand signaling. The sequence is that of Precursor of CEP10 from Arabidopsis thaliana (Mouse-ear cress).